We begin with the raw amino-acid sequence, 354 residues long: Coiled-coil domain-containing protein 86 (354 aa).

Residues 1 to 354 (MDTPLRRSRR…QPPQRPATKV (354 aa)) form a disordered region. Phosphoserine occurs at positions 18 and 24. Basic and acidic residues predominate over residues 31 to 44 (VLVEFESNPKETGE). Phosphoserine occurs at positions 47 and 53. Positions 49–58 (PGLGSPSRQP) are enriched in low complexity. The residue at position 60 (T60) is a Phosphothreonine. S61, S64, S75, S86, S105, S108, S123, and S183 each carry phosphoserine. The span at 97 to 107 (FPQNQPESSPE) shows a compositional bias: polar residues. Basic and acidic residues predominate over residues 199–211 (PAREGPAPKKREG). 2 positions are modified to phosphoserine: S212 and S213. Residues 232–248 (GKPKSGRVWKDRSKKRF) show a composition bias toward basic residues. Basic and acidic residues-rich tracts occupy residues 267–289 (DRQERKLAKDFARHLEEEKERRR) and 297–311 (AENLRRRLENERKAE). Residues 274–317 (AKDFARHLEEEKERRRQEKKKRRAENLRRRLENERKAEIVQVIR) adopt a coiled-coil conformation. The segment covering 320–330 (AKLKRAKKKQL) has biased composition (basic residues). R336 bears the Citrulline mark.

Citrullinated by PADI4.

It localises to the nucleus. Its subcellular location is the chromosome. The protein resides in the nucleolus. Its function is as follows. Required for proper chromosome segregation during mitosis and error-free mitotic progression. The protein is Coiled-coil domain-containing protein 86 of Bos taurus (Bovine).